The primary structure comprises 538 residues: Bifunctional purine biosynthesis protein PurH (538 aa).

Positions 8 to 158 constitute an MGS-like domain; it reads IPAPDKVQVK…KNHAYVTTLT (151 aa).

This sequence belongs to the PurH family.

The catalysed reaction is (6R)-10-formyltetrahydrofolate + 5-amino-1-(5-phospho-beta-D-ribosyl)imidazole-4-carboxamide = 5-formamido-1-(5-phospho-D-ribosyl)imidazole-4-carboxamide + (6S)-5,6,7,8-tetrahydrofolate. It carries out the reaction IMP + H2O = 5-formamido-1-(5-phospho-D-ribosyl)imidazole-4-carboxamide. The protein operates within purine metabolism; IMP biosynthesis via de novo pathway; 5-formamido-1-(5-phospho-D-ribosyl)imidazole-4-carboxamide from 5-amino-1-(5-phospho-D-ribosyl)imidazole-4-carboxamide (10-formyl THF route): step 1/1. Its pathway is purine metabolism; IMP biosynthesis via de novo pathway; IMP from 5-formamido-1-(5-phospho-D-ribosyl)imidazole-4-carboxamide: step 1/1. This chain is Bifunctional purine biosynthesis protein PurH, found in Rhizobium rhizogenes (strain K84 / ATCC BAA-868) (Agrobacterium radiobacter).